The chain runs to 114 residues: UPF0145 protein Acry_1752 (114 aa).

The protein belongs to the UPF0145 family.

The polypeptide is UPF0145 protein Acry_1752 (Acidiphilium cryptum (strain JF-5)).